Consider the following 960-residue polypeptide: Dynamin-like GTPase OPA1, mitochondrial (960 aa).

The transit peptide at 1-87 (MWRLRRAAVA…IKYGYQPRRN (87 aa)) directs the protein to the mitochondrion. The Mitochondrial matrix portion of the chain corresponds to 88–96 (FWPARLATR). A helical membrane pass occupies residues 97-113 (LLKLRYLILGSAVGGGY). The Mitochondrial intermembrane portion of the chain corresponds to 114 to 770 (TAKKTFDQWK…NAIENMVGPD (657 aa)). Residues 210–254 (SDKEKIDQLQEELLHTQLKYQRILERLEKENKELRKLVLQKDDKG) are a coiled coil. K228 is modified (N6-acetyllysine). Residues 285–561 (QDHLPRVVVV…FWKMVRESVE (277 aa)) enclose the Dynamin-type G domain. The segment at 295-302 (GDQSAGKT) is G1 motif. GTP is bound by residues S298, G300, K301, T302, S303, and G317. Residue T302 participates in Mg(2+) binding. The G2 motif stretch occupies residues 321 to 324 (MMTR). Mg(2+) contacts are provided by T323 and D398. The G3 motif stretch occupies residues 398 to 401 (DLPG). Positions 467-470 (TKVD) are G4 motif. Residues K468, D470, and T503 each coordinate GTP. The segment at 501-504 (VVTG) is G5 motif. 2 stalk region regions span residues 589 to 836 (DRNE…IKDT) and 874 to 928 (CNDV…IKLL). Residues 736–856 (SDKQQWDAAI…KTALNHCNLC (121 aa)) form a paddle region region. Residues 771–781 (WKKRWLYWKNR) lie within the membrane without spanning it. Topologically, residues 782-960 (TQEQCVHNET…AFIEALHQEK (179 aa)) are mitochondrial intermembrane. Residues C856 and C874 are joined by a disulfide bond. Residues 895–960 (RQQLTNTEVR…AFIEALHQEK (66 aa)) are a coiled coil.

It belongs to the TRAFAC class dynamin-like GTPase superfamily. Dynamin/Fzo/YdjA family. In terms of assembly, oligomeric complex consisting of membrane-bound and soluble forms of OPA1. Interacts with RCC1L; RCC1L acts as a guanine nucleotide exchange factor (GEF) for OPA1 by exchanging bound GDP for free GTP. Interacts with CHCHD3 and IMMT; these interactions occur preferentially with soluble OPA1 forms. Interacts with PRELID1. Cleaved by OMA1 or YME1L downstream of the transmembrane region in response to different signals to generate soluble forms. Cleaved by OMA1 at position S1 following stress conditions, generating the short soluble form (Dynamin-like GTPase OPA1, short form; S-OPA1). AFG3L2 is involved in the regulation of OMA1-dependent processing of OPA1. PARL-dependent proteolytic processing releases an antiapoptotic soluble form not required for mitochondrial fusion.

Its subcellular location is the mitochondrion inner membrane. The protein localises to the mitochondrion intermembrane space. It catalyses the reaction GTP + H2O = GDP + phosphate + H(+). Its activity is regulated as follows. Activated by guanine nucleotide exchange factor RCC1L. Functionally, dynamin-related GTPase that is essential for normal mitochondrial morphology by mediating fusion of the mitochondrial inner membranes, regulating cristae morphology and maintaining respiratory chain function. Exists in two forms: the transmembrane, long form (Dynamin-like GTPase OPA1, long form; L-OPA1), which is tethered to the inner mitochondrial membrane, and the short soluble form (Dynamin-like GTPase OPA1, short form; S-OPA1), which results from proteolytic cleavage and localizes in the intermembrane space. Both forms (L-OPA1 and S-OPA1) cooperate to catalyze the fusion of the mitochondrial inner membrane. The equilibrium between L-OPA1 and S-OPA1 is essential: excess levels of S-OPA1, produced by cleavage by OMA1 following loss of mitochondrial membrane potential, lead to an impaired equilibrium between L-OPA1 and S-OPA1, inhibiting mitochondrial fusion. The balance between L-OPA1 and S-OPA1 also influences cristae shape and morphology. Involved in remodeling cristae and the release of cytochrome c during apoptosis. Proteolytic processing by PARL in response to intrinsic apoptotic signals may lead to disassembly of OPA1 oligomers and release of the caspase activator cytochrome C (CYCS) into the mitochondrial intermembrane space. Acts as a regulator of T-helper Th17 cells, which are characterized by cells with fused mitochondria with tight cristae, by mediating mitochondrial membrane remodeling: OPA1 is required for interleukin-17 (IL-17) production. Its role in mitochondrial morphology is required for mitochondrial genome maintenance. Constitutes the transmembrane long form (L-OPA1) that plays a central role in mitochondrial inner membrane fusion and cristae morphology. L-OPA1 and the soluble short form (S-OPA1) form higher-order helical assemblies that coordinate the fusion of mitochondrial inner membranes. Inner membrane-anchored L-OPA1 molecules initiate membrane remodeling by recruiting soluble S-OPA1 to rapidly polymerize into a flexible cylindrical scaffold encaging the mitochondrial inner membrane. Once at the membrane surface, the formation of S-OPA1 helices induce bilayer curvature. OPA1 dimerization through the paddle region, which inserts into cardiolipin-containing membrane, promotes GTP hydrolysis and the helical assembly of a flexible OPA1 lattice on the membrane, which drives membrane curvature and mitochondrial fusion. Plays a role in the maintenance and remodeling of mitochondrial cristae, some invaginations of the mitochondrial inner membrane that provide an increase in the surface area. Probably acts by forming helical filaments at the inside of inner membrane tubes with the shape and dimensions of crista junctions. The equilibrium between L-OPA1 and S-OPA1 influences cristae shape and morphology: increased L-OPA1 levels promote cristae stacking and elongated mitochondria, while increased S-OPA1 levels correlated with irregular cristae packing and round mitochondria shape. In terms of biological role, constitutes the soluble short form (S-OPA1) generated by cleavage by OMA1, which plays a central role in mitochondrial inner membrane fusion and cristae morphology. The transmembrane long form (L-OPA1) and the S-OPA1 form higher-order helical assemblies that coordinate the fusion of mitochondrial inner membranes. Inner membrane-anchored L-OPA1 molecules initiate membrane remodeling by recruiting soluble S-OPA1 to rapidly polymerize into a flexible cylindrical scaffold encaging the mitochondrial inner membrane. Once at the membrane surface, the formation of S-OPA1 helices induce bilayer curvature. OPA1 dimerization through the paddle region, which inserts into cardiolipin-containing membrane, promotes GTP hydrolysis and the helical assembly of a flexible OPA1 lattice on the membrane, which drives membrane curvature and mitochondrial fusion. Excess levels of S-OPA1 produced by cleavage by OMA1 following stress conditions that induce loss of mitochondrial membrane potential, lead to an impaired equilibrium between L-OPA1 and S-OPA1, thereby inhibiting mitochondrial fusion. Involved in mitochondrial safeguard in response to transient mitochondrial membrane depolarization by mediating flickering: cleavage by OMA1 leads to excess production of S-OPA1, preventing mitochondrial hyperfusion. Plays a role in the maintenance and remodeling of mitochondrial cristae, some invaginations of the mitochondrial inner membrane that provide an increase in the surface area. Probably acts by forming helical filaments at the inside of inner membrane tubes with the shape and dimensions of crista junctions. The equilibrium between L-OPA1 and S-OPA1 influences cristae shape and morphology: increased L-OPA1 levels promote cristae stacking and elongated mitochondria, while increased S-OPA1 levels correlated with irregular cristae packing and round mitochondria shape. The protein is Dynamin-like GTPase OPA1, mitochondrial of Pongo abelii (Sumatran orangutan).